The following is a 542-amino-acid chain: Ribonuclease Y (542 aa).

A helical membrane pass occupies residues 1–21; sequence MLIALIAVSVLAVAAIIGSLA. The tract at residues 52–92 is disordered; it reads SRASQDLADSRKDVAKARAELESSRTRASDEARRADNADQA. Basic and acidic residues predominate over residues 59–92; that stretch reads ADSRKDVAKARAELESSRTRASDEARRADNADQA. Residues 229 to 289 enclose the KH domain; sequence VVSVVPLPSN…MRREVARQAL (61 aa). One can recognise an HD domain in the interval 355–449; that stretch reads VLDHCVECAR…VKAADAISAA (95 aa).

The protein belongs to the RNase Y family.

It is found in the cell membrane. In terms of biological role, endoribonuclease that initiates mRNA decay. This chain is Ribonuclease Y, found in Cutibacterium acnes (strain DSM 16379 / KPA171202) (Propionibacterium acnes).